Here is an 80-residue protein sequence, read N- to C-terminus: N-V protease (80 aa).

Belongs to the peptidase S8 family. In terms of assembly, monomer. Body cavity.

It is found in the secreted. Its activity is regulated as follows. Inhibited by the serine protease inhibitors DFP, PMSF and TLCK. Not inhibited by the serine protease inhibitors aprotinin, elastinal, SBTI and benzamidine, the cysteine protease inhibitors iodoacetate and E64, or the metalloprotease inhibitors EDTA and EGTA. In terms of biological role, serine protease. Hydrolyzes the alpha chains of fibrin and fibrinogen completely, has lower activity on the beta and gamma chains of fibrin and fibrinogen. The chain is N-V protease from Alitta virens (Sandworm).